A 413-amino-acid polypeptide reads, in one-letter code: Phosphatidylcholine-sterol acyltransferase (413 aa).

A signal peptide spans Gly1–Gln22. Cys72 and Cys96 are joined by a disulfide. N-linked (GlcNAc...) asparagine glycosylation occurs at Asn106. Ser203 serves as the catalytic Charge relay system. Residue Ser203 is the Nucleophile of the active site. The N-linked (GlcNAc...) asparagine glycan is linked to Asn294. The cysteines at positions 335 and 378 are disulfide-linked. Residues Asp367 and His399 each act as charge relay system in the active site. An N-linked (GlcNAc...) asparagine glycan is attached at Asn406.

It belongs to the AB hydrolase superfamily. Lipase family. Detected in blood plasma (at protein level). Expressed in liver, brain and adrenal glands. Lower expression in testes. In laying hens, expressed higher in brain than in liver. In roosters, higher levels in liver than in brain.

The protein resides in the secreted. It catalyses the reaction a sterol + a 1,2-diacyl-sn-glycero-3-phosphocholine = a sterol ester + a 1-acyl-sn-glycero-3-phosphocholine. With respect to regulation, APOA1 is the most potent activator in plasma. Also activated by APOE, APOC1 and APOA4. Central enzyme in the extracellular metabolism of plasma lipoproteins. Synthesized mainly in the liver and secreted into plasma where it converts cholesterol and phosphatidylcholines (lecithins) to cholesteryl esters and lysophosphatidylcholines on the surface of high and low density lipoproteins (HDLs and LDLs). The cholesterol ester is then transported back to the liver. Also produced in the brain by primary astrocytes, and esterifies free cholesterol on nascent APOE-containing lipoproteins secreted from glia and influences cerebral spinal fluid (CSF) APOE- and APOA1 levels. Together with APOE and the cholesterol transporter ABCA1, plays a key role in the maturation of glial-derived, nascent lipoproteins. Required for remodeling high-density lipoprotein particles into their spherical forms. Has a preference for plasma 16:0-18:2 or 18:O-18:2 phosphatidylcholines. The protein is Phosphatidylcholine-sterol acyltransferase (LCAT) of Gallus gallus (Chicken).